Consider the following 876-residue polypeptide: Valine--tRNA ligase (876 aa).

A 'HIGH' region motif is present at residues 44–54 (PNVTGKLHLGH). The short motif at 520–524 (KMSKS) is the 'KMSKS' region element. Residue lysine 523 coordinates ATP. Residues 805–876 (LEGLIDMDKE…VKARIEQLKA (72 aa)) adopt a coiled-coil conformation.

The protein belongs to the class-I aminoacyl-tRNA synthetase family. ValS type 1 subfamily. As to quaternary structure, monomer.

It is found in the cytoplasm. It catalyses the reaction tRNA(Val) + L-valine + ATP = L-valyl-tRNA(Val) + AMP + diphosphate. Functionally, catalyzes the attachment of valine to tRNA(Val). As ValRS can inadvertently accommodate and process structurally similar amino acids such as threonine, to avoid such errors, it has a 'posttransfer' editing activity that hydrolyzes mischarged Thr-tRNA(Val) in a tRNA-dependent manner. This Staphylococcus carnosus (strain TM300) protein is Valine--tRNA ligase.